The primary structure comprises 107 residues: MMKVLVVVALLVTLISYSSSEGIDDLEADELLSLMANEQTRKECIPKHHECTSNKHGCCRGNFFKYKCQCTTVVTQDGEQTERCFCGTPPHHKAAELVVGFGKKIFG.

The first 20 residues, 1 to 20 (MMKVLVVVALLVTLISYSSS), serve as a signal peptide directing secretion. Residues 21-41 (EGIDDLEADELLSLMANEQTR) constitute a propeptide that is removed on maturation. 4 disulfides stabilise this stretch: Cys44–Cys59, Cys51–Cys68, Cys58–Cys86, and Cys70–Cys84.

It belongs to the neurotoxin 19 (CSTX) family. 04 (U1-Lctx) subfamily. In terms of tissue distribution, expressed by the venom gland.

The protein resides in the secreted. The protein is U1-lycotoxin-Ls1b of Lycosa singoriensis (Wolf spider).